A 140-amino-acid chain; its full sequence is Putative transcription elongation factor S-II-like protein 349L (140 aa).

The TFIIS-type zinc finger occupies G100 to V139. Zn(2+) is bound by residues C104, C106, C131, and C134.

Belongs to the IIV-6 349L family.

The chain is Putative transcription elongation factor S-II-like protein 349L from Acheta domesticus (House cricket).